We begin with the raw amino-acid sequence, 400 residues long: Serine/threonine transporter SstT (400 aa).

8 helical membrane passes run 14–34 (IIIA…VTPY), 48–68 (SVAP…FQVG), 76–96 (VLLL…IASL), 136–156 (AISE…GLAM), 177–197 (IIHK…AVTF), 211–231 (LLAV…PILV), 293–313 (LAGA…TLGI), and 334–354 (ASGV…LFGI).

It belongs to the dicarboxylate/amino acid:cation symporter (DAACS) (TC 2.A.23) family.

It is found in the cell inner membrane. The enzyme catalyses L-serine(in) + Na(+)(in) = L-serine(out) + Na(+)(out). It catalyses the reaction L-threonine(in) + Na(+)(in) = L-threonine(out) + Na(+)(out). In terms of biological role, involved in the import of serine and threonine into the cell, with the concomitant import of sodium (symport system). This Acinetobacter baumannii (strain SDF) protein is Serine/threonine transporter SstT.